The sequence spans 364 residues: Probable protein phosphatase methylesterase 1 (364 aa).

The segment at 1–53 (MSDDKLDTLPDLQSETSHVTTPHRQNDLLRQAVTHGRPPPVPSTSTSGKKREM) is disordered. A compositionally biased stretch (polar residues) spans 11–23 (DLQSETSHVTTPH). Catalysis depends on residues Ser-164, Asp-190, and His-316.

The protein belongs to the AB hydrolase superfamily.

It carries out the reaction [phosphatase 2A protein]-C-terminal L-leucine methyl ester + H2O = [phosphatase 2A protein]-C-terminal L-leucine + methanol + H(+). Functionally, demethylates proteins that have been reversibly carboxymethylated. This chain is Probable protein phosphatase methylesterase 1, found in Caenorhabditis elegans.